Consider the following 216-residue polypeptide: Probable nicotinate-nucleotide adenylyltransferase (216 aa).

This sequence belongs to the NadD family.

The enzyme catalyses nicotinate beta-D-ribonucleotide + ATP + H(+) = deamido-NAD(+) + diphosphate. It participates in cofactor biosynthesis; NAD(+) biosynthesis; deamido-NAD(+) from nicotinate D-ribonucleotide: step 1/1. In terms of biological role, catalyzes the reversible adenylation of nicotinate mononucleotide (NaMN) to nicotinic acid adenine dinucleotide (NaAD). This chain is Probable nicotinate-nucleotide adenylyltransferase, found in Geobacter sp. (strain M21).